We begin with the raw amino-acid sequence, 327 residues long: Probable cell division protein WhiA (327 aa).

Positions 275–308 form a DNA-binding region, H-T-H motif; sequence SLEELGRLADPPMTKDAVAGRIRRLLSMADRKAK.

This sequence belongs to the WhiA family.

Involved in cell division and chromosome segregation. The chain is Probable cell division protein WhiA from Mycobacterium bovis (strain ATCC BAA-935 / AF2122/97).